The following is a 323-amino-acid chain: Sphingolipid delta(4)-desaturase DES1 (323 aa).

Gly2 carries N-myristoyl glycine lipidation. The next 2 helical transmembrane spans lie at 41–61 (HNLI…FYLV) and 68–88 (WVIF…TLAI). Positions 89-93 (HEISH) match the Histidine box-1 motif. A helical transmembrane segment spans residues 104 to 124 (WNRWFGMFANLSLGVPYSISF). The short motif at 128-132 (HMDHH) is the Histidine box-2 element. 3 consecutive transmembrane segments (helical) span residues 152-172 (FFCT…FYAF), 184-204 (YLEI…YYVF), and 209-229 (LVYM…SGHF). Residues 259–263 (HNEHH) carry the Histidine box-3 motif. Residue Ser307 is modified to Phosphoserine.

Belongs to the fatty acid desaturase type 1 family. DEGS subfamily. In terms of assembly, interacts with RLBP1; the interaction increases synthesis of chromophore-precursors by DEGS1. Post-translationally, myristoylation can target the enzyme to the mitochondria leading to an increase in ceramide levels. In terms of tissue distribution, detected in testis. Detected in pachytene spermatocytes and round spermatids. Expressed in retina and retinal pigment epithelium by Mueller cells (at protein level).

It localises to the mitochondrion membrane. The protein resides in the endoplasmic reticulum membrane. It carries out the reaction an N-acylsphinganine + 2 Fe(II)-[cytochrome b5] + O2 + 2 H(+) = an N-acylsphing-4-enine + 2 Fe(III)-[cytochrome b5] + 2 H2O. The enzyme catalyses all-trans-retinol = 11-cis-retinol. The catalysed reaction is all-trans-retinol = 9-cis-retinol. It catalyses the reaction all-trans-retinol = 13-cis-retinol. It carries out the reaction 11-cis-retinol = 13-cis-retinol. The enzyme catalyses 11-cis-retinol = 9-cis-retinol. Has sphingolipid-delta-4-desaturase activity. Converts D-erythro-sphinganine to D-erythro-sphingosine (E-sphing-4-enine). Catalyzes the equilibrium isomerization of retinols. The polypeptide is Sphingolipid delta(4)-desaturase DES1 (Mus musculus (Mouse)).